We begin with the raw amino-acid sequence, 397 residues long: 4-O-methyl-glucuronoyl methylesterase (397 aa).

The signal sequence occupies residues 1–18 (MVHLTSALLVAGAAFAAA). 3 disulfide bridges follow: Cys31-Cys65, Cys212-Cys347, and Cys244-Cys319. The GXSYXG catalytic site motif motif lies at 211–216 (GCSRNG). Ser213 acts as the Nucleophile in catalysis. Residues Lys217, Gln259, Glu267, and Trp310 each contribute to the substrate site. The active-site Proton donor/acceptor is His346.

It belongs to the carbohydrate esterase 15 (CE15) family.

The protein resides in the secreted. The enzyme catalyses a 4-O-methyl-alpha-D-glucuronosyl ester derivative + H2O = 4-O-methyl-alpha-D-glucuronate derivative + an alcohol + H(+). Glucuronoyl esterase which may play a significant role in biomass degradation, as it is considered to disconnect hemicellulose from lignin through the hydrolysis of the ester bond between 4-O-methyl-D-glucuronic acid residues of glucuronoxylans and aromatic alcohols of lignin. The chain is 4-O-methyl-glucuronoyl methylesterase (ge2) from Thermothelomyces thermophilus (strain ATCC 42464 / BCRC 31852 / DSM 1799) (Sporotrichum thermophile).